Consider the following 1207-residue polypeptide: Dermatan-sulfate epimerase-like protein (1207 aa).

The signal sequence occupies residues 1–22 (MAFMFTEHLLFLTLMMCSFSTC). N-linked (GlcNAc...) asparagine glycosylation is found at N28, N661, N683, and N704. 2 consecutive transmembrane segments (helical) span residues 761–781 (FPFG…SLVI) and 798–818 (CVLI…WSTC). N869 carries N-linked (GlcNAc...) asparagine glycosylation.

This sequence belongs to the dermatan-sulfate isomerase family.

It is found in the membrane. This is Dermatan-sulfate epimerase-like protein (Dsel) from Mus musculus (Mouse).